The sequence spans 76 residues: UPF0154 protein Exig_1099 (76 aa).

The chain crosses the membrane as a helical span at residues 4 to 24 (WIWILIALLCLVAGVALGFYI). The disordered stretch occupies residues 54-76 (KPSQKKVNQVMRSMSGSMKSPKK).

Belongs to the UPF0154 family.

The protein resides in the cell membrane. The protein is UPF0154 protein Exig_1099 of Exiguobacterium sibiricum (strain DSM 17290 / CCUG 55495 / CIP 109462 / JCM 13490 / 255-15).